A 132-amino-acid chain; its full sequence is Large ribosomal subunit protein eL28 (132 aa).

It belongs to the eukaryotic ribosomal protein eL28 family.

The polypeptide is Large ribosomal subunit protein eL28 (rpl28) (Dictyostelium discoideum (Social amoeba)).